The sequence spans 518 residues: Reduced folate transporter (518 aa).

N-acetylmethionine is present on M1. Topologically, residues 1–29 (MVPTGQVAEKQACEEPRQDRELKSWRCLV) are cytoplasmic. The helical transmembrane segment at 30–50 (FYLCFFGFMAQLRPGESFITP) threads the bilayer. Positions 48 and 49 each coordinate folate. The Extracellular segment spans residues 51–62 (YLLQQNFTIEQV). The N-linked (GlcNAc...) asparagine glycan is linked to N56. The helical transmembrane segment at 63–85 (TNEIIPVLPYSHLAVLVPIFLLT) threads the bilayer. Over 86–89 (DYLR) the chain is Cytoplasmic. The helical transmembrane segment at 90 to 110 (YKPILILQCLSFMCVWLLLLL) threads the bilayer. The Extracellular segment spans residues 111 to 114 (GTSV). A helical membrane pass occupies residues 115-137 (VHMQLMEVFYSVTMAARIAYSSY). Folate contacts are provided by E121 and R131. Residues 138–151 (IFSLVRPSRYQRMA) lie on the Cytoplasmic side of the membrane. Residues 152 to 176 (SYSRAAVLLGVFTSSVLGQVLWPLE) form a helical membrane-spanning segment. V162 provides a ligand contact to folate. Residues 177–181 (QKSQN) are Extracellular-facing. Residues 182–200 (SNMLNYISLGFIIFSLGLS) form a helical membrane-spanning segment. Topologically, residues 201 to 266 (LFLKRPKHSL…LSELVGNLRQ (66 aa)) are cytoplasmic. The chain crosses the membrane as a helical span at residues 267-292 (PQLRLWCLWWVFNSAGYYLIVYYVHV). 3 residues coordinate folate: A281, G282, and I286. The Extracellular portion of the chain corresponds to 293 to 300 (LWSIDKNL). A helical membrane pass occupies residues 301–323 (NYNGAVDAASTLLSAITSFSAGF). Residues 324 to 329 (VKIRWA) are Cytoplasmic-facing. The chain crosses the membrane as a helical span at residues 330-350 (LWSKLVIASVIAIQAGLVFCM). The Extracellular segment spans residues 351 to 353 (YMV). Residues 354 to 377 (HYVTWVHKIWVLYMTYVLFRGAYQ) traverse the membrane as a helical segment. Residues Y366 and V370 each coordinate folate. The Cytoplasmic segment spans residues 378–391 (FLVPIATFQIASSL). A helical transmembrane segment spans residues 392–415 (SKELCALVFGINTFLATALKTAIT). The interval 407–419 (ATALKTAITLVVS) is required for substrate-binding. Residues 416 to 423 (LVVSDKRG) are Extracellular-facing. The chain crosses the membrane as a helical span at residues 424 to 448 (LGLKVEKQFCIYSVYFMVLSVICFV). Over 449-512 (GAVLDGVRYC…DGVEDSEASL (64 aa)) the chain is Cytoplasmic. Residues S473, S478, and S483 each carry the phosphoserine modification. The segment at 480–518 (QVPSMQDGGLGGLQPSAPQLLPEDGVEDSEASLRAEAKA) is disordered.

This sequence belongs to the reduced folate carrier (RFC) transporter (TC 2.A.48) family.

The protein resides in the cell membrane. It is found in the apical cell membrane. The protein localises to the basolateral cell membrane. It catalyses the reaction 5-amino-1-(5-phospho-beta-D-ribosyl)imidazole-4-carboxamide(in) + (6S)-5-methyl-5,6,7,8-tetrahydrofolate(out) = 5-amino-1-(5-phospho-beta-D-ribosyl)imidazole-4-carboxamide(out) + (6S)-5-methyl-5,6,7,8-tetrahydrofolate(in). Antiporter that mediates the import of reduced folates, driven by the export of organic anions. Also acts as an importer of immunoreactive cyclic dinucleotides, but with a lower transporter activity. Mechanistically, acts as a secondary active transporter, which exports intracellular organic anions down their concentration gradients to facilitate the uptake of its substrates. Has high affinity for N5-methyltetrahydrofolate, the predominant circulating form of folate. Also mediates the import of antifolate drug methotrexate. 5-amino-4-imidazolecarboxamide riboside (AICAR), when phosphorylated to AICAR monophosphate, can serve as an organic anion for antiporter activity. The protein is Reduced folate transporter of Cricetulus griseus (Chinese hamster).